Consider the following 170-residue polypeptide: Translocon-associated protein subunit gamma (170 aa).

Residues 1 to 24 (MAEVDEFSAFRHENDVSIEQRIVY) are Lumenal-facing. A helical membrane pass occupies residues 25 to 45 (FINSLIVALVPVYLYHAIFFM). Over 46–51 (SIDDHM) the chain is Cytoplasmic. A helical membrane pass occupies residues 52–72 (IIYGSVTLFAAIVLTFAYNNI). Residues 73–121 (YRMKRLKLSASREHISIASKNKVGDKKKFAAAQKEVQALVTSHEAIAAS) lie on the Lumenal side of the membrane. The chain crosses the membrane as a helical span at residues 122 to 141 (IMYNNAVFLICVSIFSFIIF). Over 142 to 145 (KNVP) the chain is Cytoplasmic. Residues 146–168 (LVYNYIISISLGAGLTSFLSTSS) form a helical membrane-spanning segment.

It belongs to the TRAP-gamma family. As to quaternary structure, heterotrimer of TRAP-alpha, TRAP-beta and TRAP-gamma.

It is found in the endoplasmic reticulum membrane. TRAP proteins are part of a complex whose function is to bind calcium to the ER membrane and thereby regulate the retention of ER resident proteins. The sequence is that of Translocon-associated protein subunit gamma (ssr3) from Dictyostelium discoideum (Social amoeba).